Consider the following 192-residue polypeptide: Peptidyl-tRNA hydrolase (192 aa).

Tyrosine 14 is a tRNA binding site. Histidine 19 functions as the Proton acceptor in the catalytic mechanism. 3 residues coordinate tRNA: tyrosine 64, asparagine 66, and asparagine 112.

It belongs to the PTH family. In terms of assembly, monomer.

It is found in the cytoplasm. The catalysed reaction is an N-acyl-L-alpha-aminoacyl-tRNA + H2O = an N-acyl-L-amino acid + a tRNA + H(+). Its function is as follows. Hydrolyzes ribosome-free peptidyl-tRNAs (with 1 or more amino acids incorporated), which drop off the ribosome during protein synthesis, or as a result of ribosome stalling. In terms of biological role, catalyzes the release of premature peptidyl moieties from peptidyl-tRNA molecules trapped in stalled 50S ribosomal subunits, and thus maintains levels of free tRNAs and 50S ribosomes. The chain is Peptidyl-tRNA hydrolase from Anaeromyxobacter dehalogenans (strain 2CP-C).